The following is a 331-amino-acid chain: 5'-AMP-activated protein kinase subunit gamma-1 (331 aa).

A compositionally biased stretch (polar residues) spans 1–12 (METVISSDSSPA). The disordered stretch occupies residues 1 to 26 (METVISSDSSPAVENEHPQETPESNN). CBS domains follow at residues 43–103 (PTSS…KSAL), 125–187 (SFKP…PKPE), and 198–260 (IGTY…NLDV). ADP contacts are provided by residues Arg70, 85–90 (MLTITD), Val130, 151–152 (HR), and Lys170. Residues Arg70, 85-90 (MLTITD), Val130, His151, 151-152 (HR), Lys170, Thr200, Ala205, 226-227 (SA), and 242-245 (SKFD) each bind AMP. ATP is bound by residues Arg70, 85-90 (MLTITD), Val130, 151-152 (HR), Arg152, and Lys170. Positions 138-159 (LFDAVSSLIRNKIHRLPVIDPE) match the AMPK pseudosubstrate motif. An ADP-binding site is contributed by 242–245 (SKFD). Residue 242 to 245 (SKFD) participates in ATP binding. Ser261 is modified (phosphoserine; by ULK1). At Thr263 the chain carries Phosphothreonine; by ULK1. Residue Arg269 coordinates ADP. Arg269 lines the AMP pocket. Position 269 (Arg269) interacts with ATP. Position 270 is a phosphoserine; by ULK1 (Ser270). A CBS 4 domain is found at 272-329 (YFEGVLKCYLHETLETIINRLVEAEVHRLVVVDENDVVKGIVSLSDILQALVLTGGEK). Residues Leu277 and 298 to 299 (HR) contribute to the ADP site. AMP contacts are provided by residues Leu277, His298, 298-299 (HR), and 314-317 (SLSD). ATP is bound by residues Leu277 and 298 to 299 (HR).

Belongs to the 5'-AMP-activated protein kinase gamma subunit family. In terms of assembly, AMPK is a heterotrimer of an alpha catalytic subunit (PRKAA1 or PRKAA2), a beta (PRKAB1 or PRKAB2) and a gamma non-catalytic subunits (PRKAG1, PRKAG2 or PRKAG3). Interacts with FNIP1 and FNIP2. Phosphorylated by ULK1 and ULK2; leading to negatively regulate AMPK activity and suggesting the existence of a regulatory feedback loop between ULK1, ULK2 and AMPK. In terms of processing, glycosylated; O-GlcNAcylated by OGT, promoting the AMP-activated protein kinase (AMPK) activity.

AMP/ATP-binding subunit of AMP-activated protein kinase (AMPK), an energy sensor protein kinase that plays a key role in regulating cellular energy metabolism. In response to reduction of intracellular ATP levels, AMPK activates energy-producing pathways and inhibits energy-consuming processes: inhibits protein, carbohydrate and lipid biosynthesis, as well as cell growth and proliferation. AMPK acts via direct phosphorylation of metabolic enzymes, and by longer-term effects via phosphorylation of transcription regulators. Also acts as a regulator of cellular polarity by remodeling the actin cytoskeleton; probably by indirectly activating myosin. Gamma non-catalytic subunit mediates binding to AMP, ADP and ATP, leading to activate or inhibit AMPK: AMP-binding results in allosteric activation of alpha catalytic subunit (PRKAA1 or PRKAA2) both by inducing phosphorylation and preventing dephosphorylation of catalytic subunits. ADP also stimulates phosphorylation, without stimulating already phosphorylated catalytic subunit. ATP promotes dephosphorylation of catalytic subunit, rendering the AMPK enzyme inactive. The protein is 5'-AMP-activated protein kinase subunit gamma-1 (PRKAG1) of Homo sapiens (Human).